Here is a 215-residue protein sequence, read N- to C-terminus: dITP/XTP pyrophosphatase (215 aa).

13–18 (THNTGK) lines the substrate pocket. Residue D74 is the Proton acceptor of the active site. D74 is a binding site for Mg(2+). Substrate contacts are provided by residues S75, 163-166 (FGFD), K186, and 199-200 (HR).

It belongs to the HAM1 NTPase family. As to quaternary structure, homodimer. Requires Mg(2+) as cofactor.

The catalysed reaction is XTP + H2O = XMP + diphosphate + H(+). It carries out the reaction dITP + H2O = dIMP + diphosphate + H(+). The enzyme catalyses ITP + H2O = IMP + diphosphate + H(+). Its function is as follows. Pyrophosphatase that catalyzes the hydrolysis of nucleoside triphosphates to their monophosphate derivatives, with a high preference for the non-canonical purine nucleotides XTP (xanthosine triphosphate), dITP (deoxyinosine triphosphate) and ITP. Seems to function as a house-cleaning enzyme that removes non-canonical purine nucleotides from the nucleotide pool, thus preventing their incorporation into DNA/RNA and avoiding chromosomal lesions. This Bartonella quintana (strain Toulouse) (Rochalimaea quintana) protein is dITP/XTP pyrophosphatase.